The following is a 161-amino-acid chain: M-phase phosphoprotein 6 (161 aa).

Residues lysine 37 and lysine 86 each participate in a glycyl lysine isopeptide (Lys-Gly) (interchain with G-Cter in SUMO2) cross-link. A Phosphoserine modification is found at serine 111. The Nuclear localization signal motif lies at 117–134; that stretch reads RRYETLVGTIGKKFVKKR. Glycyl lysine isopeptide (Lys-Gly) (interchain with G-Cter in SUMO2) cross-links involve residues lysine 128, lysine 151, and lysine 154.

It belongs to the MPP6 family. Associates with the RNA exosome complex, mediated by EXOSC3. Interacts with ARHGAP18. Interacts with exosome cofactors EXOSC10 and MTREX. Post-translationally, phosphorylated in M (mitotic) phase.

It localises to the nucleus. The protein resides in the nucleolus. It is found in the cytoplasm. Functionally, RNA-binding protein that associates with the RNA exosome complex. Involved in the 3'-processing of the 7S pre-RNA to the mature 5.8S rRNA and plays a role in recruiting the RNA exosome complex to pre-rRNA; this function may include C1D. This Mus musculus (Mouse) protein is M-phase phosphoprotein 6.